The primary structure comprises 335 residues: uncharacterized protein (335 aa).

This is an uncharacterized protein from Acanthamoeba polyphaga mimivirus (APMV).